A 921-amino-acid chain; its full sequence is Protein translocase subunit SecA (921 aa).

ATP contacts are provided by residues glutamine 86, 104 to 108 (GEGKT), and aspartate 512. Zn(2+) contacts are provided by cysteine 905, cysteine 907, cysteine 916, and histidine 917.

It belongs to the SecA family. As to quaternary structure, monomer and homodimer. Part of the essential Sec protein translocation apparatus which comprises SecA, SecYEG and auxiliary proteins SecDF-YajC and YidC. Zn(2+) serves as cofactor.

Its subcellular location is the cell inner membrane. The protein resides in the cytoplasm. It carries out the reaction ATP + H2O + cellular proteinSide 1 = ADP + phosphate + cellular proteinSide 2.. Functionally, part of the Sec protein translocase complex. Interacts with the SecYEG preprotein conducting channel. Has a central role in coupling the hydrolysis of ATP to the transfer of proteins into and across the cell membrane, serving both as a receptor for the preprotein-SecB complex and as an ATP-driven molecular motor driving the stepwise translocation of polypeptide chains across the membrane. The polypeptide is Protein translocase subunit SecA (Caulobacter sp. (strain K31)).